Consider the following 119-residue polypeptide: NADH-quinone oxidoreductase subunit A (119 aa).

The next 3 membrane-spanning stretches (helical) occupy residues 9–29 (VLLF…LGYV), 63–83 (LVAI…PWAV), and 88–108 (VGMT…VGFA).

It belongs to the complex I subunit 3 family. As to quaternary structure, NDH-1 is composed of 14 different subunits. Subunits NuoA, H, J, K, L, M, N constitute the membrane sector of the complex.

The protein resides in the cell inner membrane. The enzyme catalyses a quinone + NADH + 5 H(+)(in) = a quinol + NAD(+) + 4 H(+)(out). In terms of biological role, NDH-1 shuttles electrons from NADH, via FMN and iron-sulfur (Fe-S) centers, to quinones in the respiratory chain. The immediate electron acceptor for the enzyme in this species is believed to be ubiquinone. Couples the redox reaction to proton translocation (for every two electrons transferred, four hydrogen ions are translocated across the cytoplasmic membrane), and thus conserves the redox energy in a proton gradient. In Paracidovorax citrulli (strain AAC00-1) (Acidovorax citrulli), this protein is NADH-quinone oxidoreductase subunit A.